The primary structure comprises 341 residues: Dihydroorotate dehydrogenase (quinone) (341 aa).

Residues 62-66 (AGMDK) and threonine 86 contribute to the FMN site. Residue lysine 66 participates in substrate binding. Position 111–115 (111–115 (NRMGF)) interacts with substrate. The FMN site is built by asparagine 139 and asparagine 172. Substrate is bound at residue asparagine 172. Residue serine 175 is the Nucleophile of the active site. Asparagine 177 provides a ligand contact to substrate. The FMN site is built by lysine 217 and threonine 245. 246–247 (NT) provides a ligand contact to substrate. FMN-binding positions include glycine 268, glycine 297, and 318–319 (YS).

It belongs to the dihydroorotate dehydrogenase family. Type 2 subfamily. Monomer. FMN is required as a cofactor.

It localises to the cell membrane. It catalyses the reaction (S)-dihydroorotate + a quinone = orotate + a quinol. Its pathway is pyrimidine metabolism; UMP biosynthesis via de novo pathway; orotate from (S)-dihydroorotate (quinone route): step 1/1. Its function is as follows. Catalyzes the conversion of dihydroorotate to orotate with quinone as electron acceptor. The polypeptide is Dihydroorotate dehydrogenase (quinone) (Shewanella loihica (strain ATCC BAA-1088 / PV-4)).